We begin with the raw amino-acid sequence, 70 residues long: Non-histone chromosomal protein H6 (70 aa).

The segment at 1–70 (MPKRKSATKG…AAGDGAGNAK (70 aa)) is disordered. The span at 30–45 (AKPKKAAAPKKAVKGK) shows a compositional bias: basic residues. Residues 46–57 (KAAENGDAKAEA) are compositionally biased toward basic and acidic residues.

This sequence belongs to the HMGN family.

It is found in the nucleus. The protein resides in the secreted. Its function is as follows. Non-histone protein that probably binds to the inner side of nucleosomal DNA, altering the association between the DNA and the nucleosome octamer. In terms of biological role, oncorhyncin III has antibacterial activity against Gram-positive and Gram-negative bacteria at submicromolar concentrations. In Oncorhynchus mykiss (Rainbow trout), this protein is Non-histone chromosomal protein H6.